Here is a 217-residue protein sequence, read N- to C-terminus: Adenylate kinase (217 aa).

Position 11 to 16 (11 to 16 (GAGKGT)) interacts with ATP. An NMP region spans residues 31–60 (STGDMFREAMANETPVGLEAKSYIDKGNLV). AMP contacts are provided by residues threonine 32, arginine 37, 58–60 (NLV), 86–89 (GFPR), and glutamine 93. Residues 127–165 (ARYICKKCGATYNKISNPTKVEGTCDRCGGHEFFQREDD) are LID. Arginine 128 provides a ligand contact to ATP. Zn(2+) contacts are provided by cysteine 131 and cysteine 134. 137–138 (TY) contributes to the ATP binding site. Zn(2+) is bound by residues cysteine 151 and cysteine 154. AMP-binding residues include arginine 162 and arginine 173. Glutamine 201 serves as a coordination point for ATP.

It belongs to the adenylate kinase family. In terms of assembly, monomer.

The protein localises to the cytoplasm. It catalyses the reaction AMP + ATP = 2 ADP. It participates in purine metabolism; AMP biosynthesis via salvage pathway; AMP from ADP: step 1/1. Functionally, catalyzes the reversible transfer of the terminal phosphate group between ATP and AMP. Plays an important role in cellular energy homeostasis and in adenine nucleotide metabolism. The protein is Adenylate kinase of Lactobacillus johnsonii (strain CNCM I-12250 / La1 / NCC 533).